We begin with the raw amino-acid sequence, 374 residues long: Zinc finger CCCH domain-containing protein 15 homolog (374 aa).

2 C3H1-type zinc fingers span residues 89 to 116 (DPKS…HDLA) and 167 to 197 (YFLE…HCLP).

This sequence belongs to the ZC3H15/TMA46 family.

This is Zinc finger CCCH domain-containing protein 15 homolog from Caenorhabditis briggsae.